Consider the following 433-residue polypeptide: DNA polymerase processivity factor (433 aa).

The tract at residues 274–433 (RGDPFDKNYV…VPNTKKQKCG (160 aa)) is disordered. Low complexity predominate over residues 298-307 (SLSSLANAGG). 2 stretches are compositionally biased toward gly residues: residues 325–336 (GLGGLGGGGGGG) and 344–359 (GGGG…GGGG). Residues 360–376 (GDHDHGLSSKEKYEQHK) show a composition bias toward basic and acidic residues. Residues 385-398 (GGSGGGGGGGGGGL) show a composition bias toward gly residues.

This sequence belongs to the herpesviridae polymerase accessory protein family. As to quaternary structure, forms homodimers. Interacts with host SMARCB1. Interacts with host NCL/nucleolin; this interaction is important for the organization of proteins within viral replication compartments. Interacts with UL112/UL113; this interaction is necessary for efficient viral DNA replication. Interacts with UL84. Interacts with the uracil DNA glycosylase UL114. Interacts with the DNA polymerase catalytic subunit UL54. Interacts with host IRF3. Interacts with host RELA. Post-translationally, phosphorylated by UL97 on serine residues, phosphorylation seems important for UL44 nuclear entry but does not directly affect its role in replication. In terms of processing, sumoylated. Sumoylation on Lys-410 increases viral DNA replication.

It localises to the virion. It is found in the host nucleus. Its function is as follows. Accessory subunit of the DNA polymerase that plays an essential role in viral DNA replication and acts by increasing the processivity of polymerization. Forms dimers that binds to double-stranded DNA and UL54 specifically to stimulates long chain DNA synthesis efficiently. Plays an important role in maintaining the structure of viral replication compartments by interacting with host nucleolin/NUC. In addition, suppresses innate immune responses through effects on host IRF3 and NF-kappa-B. Mechanistically, interfere with the binding of IRF3 and the p65 NF-kappa-B subunit to the promoters of antiviral genes, thereby inhibiting the expression of these genes. The sequence is that of DNA polymerase processivity factor (UL44) from Human cytomegalovirus (strain Merlin) (HHV-5).